Reading from the N-terminus, the 103-residue chain is Signal recognition particle 19 kDa protein (103 aa).

It belongs to the SRP19 family. As to quaternary structure, part of the signal recognition particle protein translocation system, which is composed of SRP and FtsY. Archaeal SRP consists of a 7S RNA molecule of 300 nucleotides and two protein subunits: SRP54 and SRP19.

It is found in the cytoplasm. In terms of biological role, involved in targeting and insertion of nascent membrane proteins into the cytoplasmic membrane. Binds directly to 7S RNA and mediates binding of the 54 kDa subunit of the SRP. This Methanopyrus kandleri (strain AV19 / DSM 6324 / JCM 9639 / NBRC 100938) protein is Signal recognition particle 19 kDa protein.